Reading from the N-terminus, the 386-residue chain is Succinate--CoA ligase [ADP-forming] subunit beta (386 aa).

The region spanning 9–243 (KQLFRKYSIP…PAEDDPAEAE (235 aa)) is the ATP-grasp domain. Residues Lys-45, 52–54 (GRG), Glu-98, Val-101, and Glu-106 contribute to the ATP site. The Mg(2+) site is built by Asn-198 and Asp-212. Substrate contacts are provided by residues Asn-263 and 320-322 (GIL).

The protein belongs to the succinate/malate CoA ligase beta subunit family. In terms of assembly, heterotetramer of two alpha and two beta subunits. Mg(2+) serves as cofactor.

The enzyme catalyses succinate + ATP + CoA = succinyl-CoA + ADP + phosphate. It catalyses the reaction GTP + succinate + CoA = succinyl-CoA + GDP + phosphate. Its pathway is carbohydrate metabolism; tricarboxylic acid cycle; succinate from succinyl-CoA (ligase route): step 1/1. In terms of biological role, succinyl-CoA synthetase functions in the citric acid cycle (TCA), coupling the hydrolysis of succinyl-CoA to the synthesis of either ATP or GTP and thus represents the only step of substrate-level phosphorylation in the TCA. The beta subunit provides nucleotide specificity of the enzyme and binds the substrate succinate, while the binding sites for coenzyme A and phosphate are found in the alpha subunit. This chain is Succinate--CoA ligase [ADP-forming] subunit beta, found in Desulfotalea psychrophila (strain LSv54 / DSM 12343).